A 316-amino-acid polypeptide reads, in one-letter code: C1GALT1-specific chaperone 1 (316 aa).

The Cytoplasmic segment spans residues 1 to 6 (MLSESS). Residues 7–26 (SFLKGVMLGSIFCALITMLG) traverse the membrane as a helical; Signal-anchor for type II membrane protein segment. Topologically, residues 27–316 (HIRIGNRMHH…FLPPNGSEND (290 aa)) are lumenal.

It belongs to the glycosyltransferase 31 family. Beta3-Gal-T subfamily. In terms of assembly, associates with core 1 beta-3-galactosyltransferase (C1GALT1), probably not with the soluble active form.

The protein localises to the membrane. Probable chaperone required for the generation of 1 O-glycan Gal-beta1-3GalNAc-alpha1-Ser/Thr (T antigen), which is a precursor for many extended O-glycans in glycoproteins. Probably acts as a specific molecular chaperone assisting the folding/stability of core 1 beta-3-galactosyltransferase (C1GALT1). In Mus musculus (Mouse), this protein is C1GALT1-specific chaperone 1 (C1galt1c1).